Consider the following 101-residue polypeptide: Urease subunit beta (101 aa).

It belongs to the urease beta subunit family. As to quaternary structure, heterotrimer of UreA (gamma), UreB (beta) and UreC (alpha) subunits. Three heterotrimers associate to form the active enzyme.

It localises to the cytoplasm. The catalysed reaction is urea + 2 H2O + H(+) = hydrogencarbonate + 2 NH4(+). It participates in nitrogen metabolism; urea degradation; CO(2) and NH(3) from urea (urease route): step 1/1. The chain is Urease subunit beta from Burkholderia ambifaria (strain ATCC BAA-244 / DSM 16087 / CCUG 44356 / LMG 19182 / AMMD) (Burkholderia cepacia (strain AMMD)).